The primary structure comprises 613 residues: Oxidoreductase GME11365 (613 aa).

3 consecutive Plastocyanin-like domains span residues 72-188 (ISEA…HGPS), 198-331 (PLLI…WIHG), and 431-571 (VDWR…EQPS).

It belongs to the multicopper oxidase family.

Its pathway is secondary metabolite biosynthesis. Functionally, oxidoreductase; part of the gene cluster that mediates the biosynthesis of dibenzodioxocinones such as pestalotiollide B, a novel class of inhibitors against cholesterol ester transfer protein (CEPT). The biosynthesis initiates from condensation of acetate and malonate units catalyzed by the non-reducing PKS pks8/GME11356. Pks8/GME11356 lacks a thioesterase (TE) domain, which is important to the cyclizing of the third ring of atrochrysone carboxylic acid, and the esterase GME11355 might play the role of TE and catalyzes the cyclization reaction of the C ring. The lactamase-like protein GME11357 (or other beta-lactamases in Pestalotiopsis microspora) probably hydrolyzes the thioester bond between the ACP of pks8/GME11356 and the intermediate to release atrochrysone carboxylic acid, which is spontaneously dehydrates to form endocrocin anthrone. Endocrocin anthrone is further converted to emodin via the endocrocin intermediate. Emodin is then oxidized by several enzymes such as the Baeyer-Villiger oxidase GME11358, the oxidoreductase GME11367, the short chain dehydrogenase/reductase GME11373, as well as by other oxidoreductases from the cluster, to modify the A and C rings and open the B ring, and finally yield monodictyphenone. The prenyltransferase GME11375 may catalyze the addition reaction between the C5 side chains and the carbon bone of dibenzodioxocinones. The remaining biochemical reactions to the final product dibenzodioxocinones should be methylation catalyzed by methyltransferase GME11366 and reduction and lactonization reaction catalyzed by a series of oxidordeuctases. The chain is Oxidoreductase GME11365 from Pestalotiopsis microspora.